The chain runs to 130 residues: Small ribosomal subunit protein uS9 (130 aa).

The protein belongs to the universal ribosomal protein uS9 family.

This is Small ribosomal subunit protein uS9 from Magnetococcus marinus (strain ATCC BAA-1437 / JCM 17883 / MC-1).